The sequence spans 104 residues: Inclusion membrane protein F (104 aa).

2 helical membrane-spanning segments follow: residues 39-59 (LVVALAALVLNGALCVLSLVA) and 70-90 (LAVLVATTLASFLCAACVLFI).

The protein resides in the secreted. It is found in the host vacuole. The protein localises to the host pathogen-containing vacuole. Its subcellular location is the host pathogen-containing vacuole membrane. Functionally, inclusion membrane protein probably involved in early modification events of the chlamydial inclusion. The protein is Inclusion membrane protein F (incF) of Chlamydia trachomatis serovar D (strain ATCC VR-885 / DSM 19411 / UW-3/Cx).